The chain runs to 702 residues: Ribosomal RNA large subunit methyltransferase K/L (702 aa).

Residues 43–154 enclose the THUMP domain; the sequence is LIYQSLMWSR…KETASIALDL (112 aa).

This sequence belongs to the methyltransferase superfamily. RlmKL family.

The protein localises to the cytoplasm. The catalysed reaction is guanosine(2445) in 23S rRNA + S-adenosyl-L-methionine = N(2)-methylguanosine(2445) in 23S rRNA + S-adenosyl-L-homocysteine + H(+). It catalyses the reaction guanosine(2069) in 23S rRNA + S-adenosyl-L-methionine = N(2)-methylguanosine(2069) in 23S rRNA + S-adenosyl-L-homocysteine + H(+). Functionally, specifically methylates the guanine in position 2445 (m2G2445) and the guanine in position 2069 (m7G2069) of 23S rRNA. The chain is Ribosomal RNA large subunit methyltransferase K/L from Salmonella typhi.